The primary structure comprises 454 residues: Bifunctional protein GlmU (454 aa).

A pyrophosphorylase region spans residues 1–232 (MTDRTCLSIV…VDNVIGINNR (232 aa)). Residues 11-14 (LAAG), Lys-25, Gln-78, and 83-84 (GT) contribute to the UDP-N-acetyl-alpha-D-glucosamine site. Asp-108 contacts Mg(2+). Gly-144, Glu-158, Asn-173, and Asn-230 together coordinate UDP-N-acetyl-alpha-D-glucosamine. Residue Asn-230 coordinates Mg(2+). Residues 233–253 (AELAEAETIWQNRKRRELMLS) form a linker region. An N-acetyltransferase region spans residues 254–454 (GVTLIAPETV…AIKAAKSVSK (201 aa)). The UDP-N-acetyl-alpha-D-glucosamine site is built by Arg-319 and Lys-337. The active-site Proton acceptor is the His-349. Residues Tyr-352 and Asn-363 each contribute to the UDP-N-acetyl-alpha-D-glucosamine site. Acetyl-CoA-binding positions include Ala-366, 372–373 (NY), Ser-391, Ser-409, and Arg-426.

It in the N-terminal section; belongs to the N-acetylglucosamine-1-phosphate uridyltransferase family. This sequence in the C-terminal section; belongs to the transferase hexapeptide repeat family. In terms of assembly, homotrimer. Requires Mg(2+) as cofactor.

The protein localises to the cytoplasm. The enzyme catalyses alpha-D-glucosamine 1-phosphate + acetyl-CoA = N-acetyl-alpha-D-glucosamine 1-phosphate + CoA + H(+). The catalysed reaction is N-acetyl-alpha-D-glucosamine 1-phosphate + UTP + H(+) = UDP-N-acetyl-alpha-D-glucosamine + diphosphate. It participates in nucleotide-sugar biosynthesis; UDP-N-acetyl-alpha-D-glucosamine biosynthesis; N-acetyl-alpha-D-glucosamine 1-phosphate from alpha-D-glucosamine 6-phosphate (route II): step 2/2. The protein operates within nucleotide-sugar biosynthesis; UDP-N-acetyl-alpha-D-glucosamine biosynthesis; UDP-N-acetyl-alpha-D-glucosamine from N-acetyl-alpha-D-glucosamine 1-phosphate: step 1/1. It functions in the pathway bacterial outer membrane biogenesis; LPS lipid A biosynthesis. Functionally, catalyzes the last two sequential reactions in the de novo biosynthetic pathway for UDP-N-acetylglucosamine (UDP-GlcNAc). The C-terminal domain catalyzes the transfer of acetyl group from acetyl coenzyme A to glucosamine-1-phosphate (GlcN-1-P) to produce N-acetylglucosamine-1-phosphate (GlcNAc-1-P), which is converted into UDP-GlcNAc by the transfer of uridine 5-monophosphate (from uridine 5-triphosphate), a reaction catalyzed by the N-terminal domain. The chain is Bifunctional protein GlmU from Brucella melitensis biotype 1 (strain ATCC 23456 / CCUG 17765 / NCTC 10094 / 16M).